The sequence spans 122 residues: T-cell receptor beta chain V region C5 (122 aa).

A signal peptide spans 1-7; sequence ILLCAKH. Residues 8-103 are v segment; that stretch reads MEAAVTQSPR…TAVYFCASSG (96 aa). Cysteine 31 and cysteine 99 are oxidised to a cystine. The d segment stretch occupies residues 104–108; sequence TGGAL. A j segment region spans residues 109-122; sequence DTQYFGPGTRLLVL.

This is T-cell receptor beta chain V region C5 from Mus musculus (Mouse).